Consider the following 464-residue polypeptide: Argininosuccinate lyase (464 aa).

The protein belongs to the lyase 1 family. Argininosuccinate lyase subfamily.

It localises to the cytoplasm. It carries out the reaction 2-(N(omega)-L-arginino)succinate = fumarate + L-arginine. It participates in amino-acid biosynthesis; L-arginine biosynthesis; L-arginine from L-ornithine and carbamoyl phosphate: step 3/3. The polypeptide is Argininosuccinate lyase (Pseudomonas fluorescens (strain ATCC BAA-477 / NRRL B-23932 / Pf-5)).